Consider the following 307-residue polypeptide: Non-homologous end joining protein Ku (307 aa).

The Ku domain occupies 11–179 (LSFGLVSIPV…EVRSMKDLNI (169 aa)). 2 stretches are compositionally biased toward low complexity: residues 257-267 (RGGAKAKPAAA) and 290-307 (ARAP…RARK). Positions 257-307 (RGGAKAKPAAAPRRKAPEPVAGMAEATRARKPAARAPKSPAEAPAKVRARK) are disordered.

Belongs to the prokaryotic Ku family. In terms of assembly, homodimer. Interacts with LigD.

In terms of biological role, with LigD forms a non-homologous end joining (NHEJ) DNA repair enzyme, which repairs dsDNA breaks with reduced fidelity. Binds linear dsDNA with 5'- and 3'- overhangs but not closed circular dsDNA nor ssDNA. Recruits and stimulates the ligase activity of LigD. This Paraburkholderia phymatum (strain DSM 17167 / CIP 108236 / LMG 21445 / STM815) (Burkholderia phymatum) protein is Non-homologous end joining protein Ku.